A 181-amino-acid chain; its full sequence is ATP synthase subunit delta (181 aa).

The protein belongs to the ATPase delta chain family. In terms of assembly, F-type ATPases have 2 components, F(1) - the catalytic core - and F(0) - the membrane proton channel. F(1) has five subunits: alpha(3), beta(3), gamma(1), delta(1), epsilon(1). F(0) has three main subunits: a(1), b(2) and c(10-14). The alpha and beta chains form an alternating ring which encloses part of the gamma chain. F(1) is attached to F(0) by a central stalk formed by the gamma and epsilon chains, while a peripheral stalk is formed by the delta and b chains.

The protein localises to the cell inner membrane. F(1)F(0) ATP synthase produces ATP from ADP in the presence of a proton or sodium gradient. F-type ATPases consist of two structural domains, F(1) containing the extramembraneous catalytic core and F(0) containing the membrane proton channel, linked together by a central stalk and a peripheral stalk. During catalysis, ATP synthesis in the catalytic domain of F(1) is coupled via a rotary mechanism of the central stalk subunits to proton translocation. Functionally, this protein is part of the stalk that links CF(0) to CF(1). It either transmits conformational changes from CF(0) to CF(1) or is implicated in proton conduction. This is ATP synthase subunit delta from Desulfotalea psychrophila (strain LSv54 / DSM 12343).